Reading from the N-terminus, the 102-residue chain is Small ribosomal subunit protein uS10 (102 aa).

Belongs to the universal ribosomal protein uS10 family. As to quaternary structure, part of the 30S ribosomal subunit.

Involved in the binding of tRNA to the ribosomes. The protein is Small ribosomal subunit protein uS10 of Bartonella henselae (strain ATCC 49882 / DSM 28221 / CCUG 30454 / Houston 1) (Rochalimaea henselae).